The primary structure comprises 808 residues: Protein translocase subunit SecA 2 (808 aa).

ATP-binding positions include Gln124, 142 to 146, and Asp535; that span reads GEGKT.

Belongs to the SecA family. As to quaternary structure, monomer and homodimer. Part of the essential Sec protein translocation apparatus which comprises SecA, SecYEG and auxiliary proteins SecDF. Other proteins may also be involved.

It localises to the cell membrane. Its subcellular location is the cytoplasm. It catalyses the reaction ATP + H2O + cellular proteinSide 1 = ADP + phosphate + cellular proteinSide 2.. Functionally, part of the Sec protein translocase complex. Interacts with the SecYEG preprotein conducting channel. Has a central role in coupling the hydrolysis of ATP to the transfer of proteins into and across the cell membrane, serving as an ATP-driven molecular motor driving the stepwise translocation of polypeptide chains across the membrane. The sequence is that of Protein translocase subunit SecA 2 from Mycobacterium bovis (strain BCG / Pasteur 1173P2).